We begin with the raw amino-acid sequence, 156 residues long: Toxin Res (156 aa).

Belongs to the MbcT/ParT/Res family. Homodimer. Forms a complex with cognate antitoxin Xre.

Toxic component of a type II toxin-antitoxin (TA) system. Expression in E.coli inhibits cell growth; bacteriostasis is neutralized by expression of cognate antitoxin Xre. Expression in E.coli leads to almost complete depletion of intracellular NAD(+): NAD(+) levels are partially restored when coexpressed with antitoxin Xre. The sequence is that of Toxin Res from Photorhabdus laumondii subsp. laumondii (strain DSM 15139 / CIP 105565 / TT01) (Photorhabdus luminescens subsp. laumondii).